The primary structure comprises 128 residues: Arginine decarboxylase proenzyme (128 aa).

Ser-76 serves as the catalytic Schiff-base intermediate with substrate; via pyruvic acid. Residue Ser-76 is modified to Pyruvic acid (Ser); by autocatalysis. The active-site Proton acceptor; for processing activity is the His-81. Catalysis depends on Cys-96, which acts as the Proton donor; for catalytic activity.

It belongs to the prokaryotic AdoMetDC family. Type 1 subfamily. As to quaternary structure, heterooctamer of four alpha and four beta chains arranged as a tetramer of alpha/beta heterodimers. It depends on pyruvate as a cofactor. In terms of processing, is synthesized initially as an inactive proenzyme. Formation of the active enzyme involves a self-maturation process in which the active site pyruvoyl group is generated from an internal serine residue via an autocatalytic post-translational modification. Two non-identical subunits are generated from the proenzyme in this reaction, and the pyruvate is formed at the N-terminus of the alpha chain, which is derived from the carboxyl end of the proenzyme. The post-translation cleavage follows an unusual pathway, termed non-hydrolytic serinolysis, in which the side chain hydroxyl group of the serine supplies its oxygen atom to form the C-terminus of the beta chain, while the remainder of the serine residue undergoes an oxidative deamination to produce ammonia and the pyruvoyl group blocking the N-terminus of the alpha chain.

The catalysed reaction is L-arginine + H(+) = agmatine + CO2. It functions in the pathway amine and polyamine biosynthesis; agmatine biosynthesis; agmatine from L-arginine: step 1/1. Its function is as follows. Specifically catalyzes the decarboxylation of L-arginine to agmatine. Has no S-adenosylmethionine decarboxylase (AdoMetDC) activity. In Metallosphaera sedula (strain ATCC 51363 / DSM 5348 / JCM 9185 / NBRC 15509 / TH2), this protein is Arginine decarboxylase proenzyme.